The chain runs to 434 residues: MSQFVNVIGAGLAGSEAAWQIAKRGIKVNLYEMRPVKHTPAHHTDKFAELVCSNSLRANALTNAVGVLKEEMRHLDSAIIAAADESSVPAGGALAVDRHEFAANVTDRVKNHPNVTVFQEEVQSIPEGPTIIATGPLTSEALSKELKSLTGEEYLYFYDAAAPILEKDSIDMDKVYLKSRYDKGEAAYLNCPMTEEEFDRFYEALISAETVPLKEFEKEIFFEGCMPIEVMAKRGKKTMLFGPMKPVGLEDPKTGKRPYAVVQLRQDDAAGTLYNIVGFQTHLKWGDQKEVFRLIPGLEEAEIVRYGVMHRNTFINSPSLLKPTYQFKNREDLFFAGQMTGVEGYVESAASGLVAGINAARFVKGEELVTLPEETAIGSMAYYITSTNKKSFQPMNANFGLLKDLGVRIKNKQERYAEYAKRAIETIQTISKSL.

9–14 (GAGLAG) is an FAD binding site.

Belongs to the MnmG family. TrmFO subfamily. The cofactor is FAD.

The protein resides in the cytoplasm. It carries out the reaction uridine(54) in tRNA + (6R)-5,10-methylene-5,6,7,8-tetrahydrofolate + NADH + H(+) = 5-methyluridine(54) in tRNA + (6S)-5,6,7,8-tetrahydrofolate + NAD(+). The enzyme catalyses uridine(54) in tRNA + (6R)-5,10-methylene-5,6,7,8-tetrahydrofolate + NADPH + H(+) = 5-methyluridine(54) in tRNA + (6S)-5,6,7,8-tetrahydrofolate + NADP(+). Its function is as follows. Catalyzes the folate-dependent formation of 5-methyl-uridine at position 54 (M-5-U54) in all tRNAs. The protein is Methylenetetrahydrofolate--tRNA-(uracil-5-)-methyltransferase TrmFO of Bacillus pumilus (strain SAFR-032).